The following is a 458-amino-acid chain: uncharacterized protein (458 aa).

2 disordered regions span residues 339-397 (GTGY…ARIL) and 434-458 (YNSEDEDFEYDSDSEDDDSDSEDDC). Acidic residues-rich tracts occupy residues 344-390 (SDSD…EEEP) and 436-458 (SEDEDFEYDSDSEDDDSDSEDDC).

This is an uncharacterized protein from Invertebrate iridescent virus 3 (IIV-3).